Consider the following 412-residue polypeptide: STAGA complex 65 subunit gamma (412 aa).

Positions 81–107 are disordered; the sequence is AQTQSQQQTEGVKAEESEPLPSCPGSP. Ser-106 is subject to Phosphoserine. Lys-269 is covalently cross-linked (Glycyl lysine isopeptide (Lys-Gly) (interchain with G-Cter in SUMO2)). 2 positions are modified to phosphoserine: Ser-321 and Ser-332. The tract at residues 364 to 412 is disordered; sequence EEPMSGMSEAGLPQSPDDSDSSYGSHSTDSLMGSSPVFNQRCRKRMRKI. The segment covering 384-393 has biased composition (low complexity); the sequence is SSYGSHSTDS.

Component of the STAGA transcription coactivator-HAT complex, at least composed of SUPT3H, SUPT7L, GCN5L2, TAF5L, TAF6L, TADA3L, TAD1L, TAF10, TAF12 and TAF9. In terms of processing, sumoylated.

The protein resides in the nucleus. The sequence is that of STAGA complex 65 subunit gamma (Supt7l) from Mus musculus (Mouse).